The following is a 640-amino-acid chain: tRNA-dihydrouridine(47) synthase [NAD(P)(+)]-like (640 aa).

The span at 1–10 shows a compositional bias: low complexity; sequence MAEVAEVAAE. Disordered stretches follow at residues 1 to 22 and 47 to 106; these read MAEV…VGAC and DKQE…PHMK. Ala2 bears the N-acetylalanine mark. Positions 64-91 are enriched in basic and acidic residues; that stretch reads PEAKRIRLEDGQENGKTEVAVESHERQV. The span at 92 to 106 shows a compositional bias: basic residues; the sequence is PKRARGQNKSRPHMK. C3H1-type zinc fingers lie at residues 110–140 and 148–178; these read YDKE…HDVG and ADLG…HLGP. Position 267 is a phosphoserine (Ser267). FMN-binding positions include 301-303 and Gln355; that span reads PLT. The active-site Proton donor is the Cys386. Lys406 is covalently cross-linked (Glycyl lysine isopeptide (Lys-Gly) (interchain with G-Cter in SUMO2)). Residues Lys425, His455, 487–489, and 510–511 each bind FMN; these read NGD and AR.

This sequence belongs to the Dus family. Dus3 subfamily. FMN serves as cofactor.

The enzyme catalyses 5,6-dihydrouridine(47) in tRNA + NAD(+) = uridine(47) in tRNA + NADH + H(+). It carries out the reaction 5,6-dihydrouridine(47) in tRNA + NADP(+) = uridine(47) in tRNA + NADPH + H(+). The catalysed reaction is a 5,6-dihydrouridine in mRNA + NAD(+) = a uridine in mRNA + NADH + H(+). It catalyses the reaction a 5,6-dihydrouridine in mRNA + NADP(+) = a uridine in mRNA + NADPH + H(+). In terms of biological role, catalyzes the synthesis of dihydrouridine, a modified base, in various RNAs, such as tRNAs, mRNAs and some long non-coding RNAs (lncRNAs). Mainly modifies the uridine in position 47 (U47) in the D-loop of most cytoplasmic tRNAs. Also able to mediate the formation of dihydrouridine in some mRNAs, thereby regulating their translation. The sequence is that of tRNA-dihydrouridine(47) synthase [NAD(P)(+)]-like from Rattus norvegicus (Rat).